Reading from the N-terminus, the 757-residue chain is RNA-directed RNA polymerase catalytic subunit (757 aa).

Residues 50–82 (SEKGKWTTNTETGAPQLNPIDGPLPEDNEPSGY) are disordered. Over residues 55–64 (WTTNTETGAP) the composition is skewed to polar residues. 2 short sequence motifs (nuclear localization signal) span residues 187–195 (RKRRVRDNM) and 203–216 (RTIG…NKKS). The interval 249-256 (RGFVYFVE) is promoter-binding site. The 198-residue stretch at 286–483 (VRKMMTNSQD…GINMSKKKSY (198 aa)) folds into the RdRp catalytic domain.

The protein belongs to the influenza viruses polymerase PB1 family. As to quaternary structure, influenza RNA polymerase is composed of three subunits: PB1, PB2 and PA. Interacts (via N-terminus) with PA (via C-terminus). Interacts (via C-terminus) with PB2 (via N-terminus); this interaction is essential for transcription initiation. Phosphorylated by host PRKCA.

The protein resides in the host nucleus. The protein localises to the host cytoplasm. It catalyses the reaction RNA(n) + a ribonucleoside 5'-triphosphate = RNA(n+1) + diphosphate. Functionally, RNA-dependent RNA polymerase which is responsible for replication and transcription of virus RNA segments. The transcription of viral mRNAs occurs by a unique mechanism called cap-snatching. 5' methylated caps of cellular mRNAs are cleaved after 10-13 nucleotides by PA. In turn, these short capped RNAs are used as primers by PB1 for transcription of viral mRNAs. During virus replication, PB1 initiates RNA synthesis and copy vRNA into complementary RNA (cRNA) which in turn serves as a template for the production of more vRNAs. The sequence is that of RNA-directed RNA polymerase catalytic subunit from Influenza A virus (strain A/Grey teal/Australia/2/1979 H4N4).